The chain runs to 93 residues: Em protein H2 (93 aa).

Positions 1-93 are disordered; it reads MASGQQERSQ…IDESKFKTKS (93 aa). 3 stretches are compositionally biased toward basic and acidic residues: residues 9 to 19, 31 to 52, and 73 to 93; these read SQLDRKAREGE, LEAH…REQM, and GGER…KTKS.

The protein belongs to the small hydrophilic plant seed protein family.

Its function is as follows. It is thought to provide protection for the cytoplasm during the desiccation stage of embryo development. The protein is Em protein H2 (EMH2) of Triticum aestivum (Wheat).